A 209-amino-acid chain; its full sequence is Uracil phosphoribosyltransferase (209 aa).

Residues Arg79, Arg104, and 131-139 each bind 5-phospho-alpha-D-ribose 1-diphosphate; that span reads DPMLATGGS. Uracil is bound by residues Ile194 and 199-201; that span reads GDA. Residue Asp200 participates in 5-phospho-alpha-D-ribose 1-diphosphate binding.

It belongs to the UPRTase family. Mg(2+) is required as a cofactor.

It catalyses the reaction UMP + diphosphate = 5-phospho-alpha-D-ribose 1-diphosphate + uracil. The protein operates within pyrimidine metabolism; UMP biosynthesis via salvage pathway; UMP from uracil: step 1/1. Allosterically activated by GTP. In terms of biological role, catalyzes the conversion of uracil and 5-phospho-alpha-D-ribose 1-diphosphate (PRPP) to UMP and diphosphate. This chain is Uracil phosphoribosyltransferase, found in Oceanobacillus iheyensis (strain DSM 14371 / CIP 107618 / JCM 11309 / KCTC 3954 / HTE831).